A 498-amino-acid polypeptide reads, in one-letter code: Fascin-3 (498 aa).

It belongs to the fascin family. In terms of tissue distribution, expressed in testis.

The protein resides in the cytoplasm. The protein localises to the cytoskeleton. Its function is as follows. Acts as an actin bundling protein. The protein is Fascin-3 (Fscn3) of Mus musculus (Mouse).